The primary structure comprises 176 residues: MDSQVRQNYHRDCEAAVNRMINMELFASYSYTSMAFYFSRDDVALPGFAHFFKENSDEEREHADKLLTFQNSRGGRIFLQDIKKPERDEWGNGVDVMQCALQLEKNVNQALLDLHKIASGKVDPHMCDFLETHYLNEQVESIKKLGDFITNLSRMDAVKNKMAEYLFDKHTMGGKN.

Positions 7–156 (QNYHRDCEAA…DFITNLSRMD (150 aa)) constitute a Ferritin-like diiron domain. Fe cation is bound by residues Glu24, Glu59, His62, Glu104, and Gln138.

This sequence belongs to the ferritin family. As to quaternary structure, in spleen, forms a homomer. The functional molecule forms a roughly spherical shell with a diameter of 12 nm and contains a central cavity into which the insoluble mineral iron core is deposited. As to expression, spleen (at protein level).

The enzyme catalyses 4 Fe(2+) + O2 + 4 H(+) = 4 Fe(3+) + 2 H2O. Its function is as follows. Stores iron in a soluble, non-toxic, readily available form. Important for iron homeostasis. Has ferroxidase activity. Iron is taken up in the ferrous form and deposited as ferric hydroxides after oxidation. This Trematomus bernacchii (Emerald rockcod) protein is Ferritin, spleen middle subunit.